Reading from the N-terminus, the 629-residue chain is DNA-directed RNA polymerase subunit beta' (629 aa).

Zn(2+) is bound by residues cysteine 70, cysteine 72, cysteine 85, and cysteine 88. The Mg(2+) site is built by aspartate 472, aspartate 474, and aspartate 476.

Belongs to the RNA polymerase beta' chain family. RpoC1 subfamily. In terms of assembly, in plastids the minimal PEP RNA polymerase catalytic core is composed of four subunits: alpha, beta, beta', and beta''. When a (nuclear-encoded) sigma factor is associated with the core the holoenzyme is formed, which can initiate transcription. Requires Mg(2+) as cofactor. Zn(2+) is required as a cofactor.

Its subcellular location is the plastid. It localises to the chloroplast. It carries out the reaction RNA(n) + a ribonucleoside 5'-triphosphate = RNA(n+1) + diphosphate. Functionally, DNA-dependent RNA polymerase catalyzes the transcription of DNA into RNA using the four ribonucleoside triphosphates as substrates. The chain is DNA-directed RNA polymerase subunit beta' from Porphyra purpurea (Red seaweed).